Here is a 418-residue protein sequence, read N- to C-terminus: Caveolae-associated protein 2 (418 aa).

The tract at residues 1–42 (MGEDAAQAEKFQHPNTDMLQEKPSSPSPMPSSTPSPSLNLGS) is disordered. Gly2 bears the N-acetylglycine mark. The tract at residues 2–168 (GEDAAQAEKF…IFQEESEIPA (167 aa)) is interaction with CAVIN1. A phosphoserine mark is found at Ser27, Ser35, Ser37, and Ser51. Coiled coils occupy residues 61 to 87 (LLDKLVNMLDAVRENQHNMEQRQINLE) and 126 to 268 (RAVR…VERR). The leucine-zipper stretch occupies residues 62–100 (LDKLVNMLDAVRENQHNMEQRQINLEGSVKGIQNDLTKL). Thr196 carries the phosphothreonine modification. 2 disordered regions span residues 200-238 (VDLSSDDELPRDEEALEDSAEEKMEESRAEKIKRSSLKK) and 262-382 (IVSV…ALQQ). Residues Ser203, Ser204, and Ser218 each carry the phosphoserine modification. The span at 203 to 219 (SSDDELPRDEEALEDSA) shows a compositional bias: acidic residues. Residues 220-238 (EEKMEESRAEKIKRSSLKK) are compositionally biased toward basic and acidic residues. Positions 275 to 287 (LTPNHQKASSGKS) are enriched in polar residues. 6 positions are modified to phosphoserine: Ser283, Ser284, Ser287, Ser288, Ser293, and Ser296. Over residues 303–321 (REGESSVENETKLEDQMQE) the composition is skewed to basic and acidic residues. Phosphoserine is present on residues Ser327, Ser336, Ser359, and Ser363. Residues 355-366 (RGNNSAVGSNAD) show a composition bias toward polar residues. Phosphothreonine is present on Thr368. The segment covering 368-377 (TIEEDEEEEP) has biased composition (acidic residues). Tyr388 is subject to Phosphotyrosine. Residues Ser390 and Ser396 each carry the phosphoserine modification. The segment at 396 to 418 (SEEMEEPSEKQVQPAVLHVDQTA) is disordered.

It belongs to the CAVIN family. Component of the CAVIN complex composed of CAVIN1, CAVIN2, CAVIN3 and CAVIN4. Binds to PRKCA in the presence of phosphatidylserine. Interacts with CAVIN4; this augments the transactivation of NPPA by CAVIN4. Interacts with CAVIN1. Interacts with CAV3. The N-terminus is blocked. As to expression, heart, adipose tissue, lung and endothelial cells (at protein level). Highly expressed in kidney and expressed at lower levels in liver, spleen, thymus, stomach, intestine and uterus.

Its subcellular location is the cytoplasm. The protein resides in the cytosol. It is found in the membrane. The protein localises to the caveola. Its function is as follows. Plays an important role in caveolar biogenesis and morphology. Regulates caveolae morphology by inducing membrane curvature within caveolae. Plays a role in caveola formation in a tissue-specific manner. Required for the formation of caveolae in the lung and fat endothelia but not in the heart endothelia. Negatively regulates the size or stability of CAVIN complexes in the lung endothelial cells. May play a role in targeting PRKCA to caveolae. The chain is Caveolae-associated protein 2 (Cavin2) from Mus musculus (Mouse).